We begin with the raw amino-acid sequence, 467 residues long: Pachytene checkpoint protein 2 homolog (467 aa).

209–216 (GPPGTGKT) is a binding site for ATP.

This sequence belongs to the AAA ATPase family. PCH2 subfamily.

It is found in the chromosome. Functionally, plays a key role in chromosome recombination during meiosis. Mediates meiotic chromosome remodeling and crossover maturation. The polypeptide is Pachytene checkpoint protein 2 homolog (Arabidopsis thaliana (Mouse-ear cress)).